The sequence spans 411 residues: Argininosuccinate synthase (411 aa).

ATP-binding positions include 10-18 (AYSGGLDTS) and Ala37. Positions 89 and 94 each coordinate L-citrulline. An ATP-binding site is contributed by Gly119. The L-aspartate site is built by Thr121, Asn125, and Asp126. Residue Asn125 participates in L-citrulline binding. L-citrulline-binding residues include Arg129, Ser178, Ser187, Glu263, and Tyr275.

This sequence belongs to the argininosuccinate synthase family. Type 1 subfamily. In terms of assembly, homotetramer.

It is found in the cytoplasm. The enzyme catalyses L-citrulline + L-aspartate + ATP = 2-(N(omega)-L-arginino)succinate + AMP + diphosphate + H(+). The protein operates within amino-acid biosynthesis; L-arginine biosynthesis; L-arginine from L-ornithine and carbamoyl phosphate: step 2/3. This is Argininosuccinate synthase from Aeromonas salmonicida (strain A449).